We begin with the raw amino-acid sequence, 105 residues long: Met repressor (105 aa).

Belongs to the MetJ family. Homodimer.

It localises to the cytoplasm. In terms of biological role, this regulatory protein, when combined with SAM (S-adenosylmethionine) represses the expression of the methionine regulon and of enzymes involved in SAM synthesis. The polypeptide is Met repressor (Yersinia pestis bv. Antiqua (strain Antiqua)).